The following is a 100-amino-acid chain: Small ribosomal subunit protein uS14c (100 aa).

The protein belongs to the universal ribosomal protein uS14 family. Part of the 30S ribosomal subunit.

It is found in the plastid. It localises to the chloroplast. Functionally, binds 16S rRNA, required for the assembly of 30S particles. The polypeptide is Small ribosomal subunit protein uS14c (Calycanthus floridus var. glaucus (Eastern sweetshrub)).